A 96-amino-acid polypeptide reads, in one-letter code: LSM complex subunit lsm2 (96 aa).

In terms of domain architecture, Sm spans 2–76 (LFYSFFKTLI…VRYVHMSSAY (75 aa)).

This sequence belongs to the snRNP Sm proteins family. Component of the heptameric LSM1-LSM7 complex that forms a seven-membered ring structure with a donut shape. The LSm subunits are arranged in the order lsm1, lsm2, lsm3, lsm6, lsm5, lsm7 and lsm4. Component of the heptameric LSM2-LSM8 complex that forms a seven-membered ring structure with a donut shape. The LSm subunits are arranged in the order lsm8, lsm2, lsm3, lsm6, lsm5, lsm7 and lsm4.

The protein resides in the nucleus. It localises to the cytoplasm. Component of LSm protein complexes, which are involved in RNA processing and may function in a chaperone-like manner. Component of the cytoplasmic LSM1-LSM7 complex which is involved in mRNA degradation by activating the decapping step. The LSM1-LSM7 complex loads onto the 3'-end of single stranded RNA. Component of the nuclear LSM2-LSM8 complex, which is involved in spliceosome assembly. The LSM2-LSM8 complex plays a role in the biogenesis of the spliceosomal U4/U6-U5 tri-snRNP complex by accelerating prp24-mediated annealing of U4/U6 di-snRNA. The LSM2-LSM8 complex binds U6 snRNA terminating with a cyclic 2',3' phosphate group; RNA with an unmodified 3' hydroxyl or non-cyclic 3' phosphate is bound less tightly. This Schizosaccharomyces pombe (strain 972 / ATCC 24843) (Fission yeast) protein is LSM complex subunit lsm2 (lsm2).